A 524-amino-acid polypeptide reads, in one-letter code: Beta-glucosidase 23 (524 aa).

Positions 1–24 (MVLQKLPLIGLLLLLTIVASPANA) are cleaved as a signal peptide. Residue Q54 participates in a beta-D-glucoside binding. N-linked (GlcNAc...) asparagine glycosylation is present at N60. A beta-D-glucoside-binding positions include H157 and 202 to 203 (NE). Residue E203 is the Proton donor of the active site. A disulfide bridge connects residues C222 and C230. A beta-D-glucoside is bound by residues Y346 and E418. The Nucleophile role is filled by E418. N-linked (GlcNAc...) asparagine glycosylation is present at N461. A beta-D-glucoside-binding positions include W468, 475–476 (EW), and F484. A glycan (N-linked (GlcNAc...) asparagine) is linked at N494. Residues 521-524 (KDEL) carry the Prevents secretion from ER motif.

The protein belongs to the glycosyl hydrolase 1 family. In terms of assembly, homodimers. Binds to the deubiquitinating enzyme AMSH3. The inactive form interacts with PBP1/JAL30 to form the PYK10 complex, at least composed of PYK10/BGLU23, BGLU21, BGLU22, JAL22, JAL23, PBP1/JAL30, PBP2/JAL31, JAL32, JAL33, JAL34, JAL35, GLL22 and GLL23. Forms interchain disulfide bonds. Expressed exclusively in roots.

It is found in the endoplasmic reticulum lumen. It carries out the reaction Hydrolysis of terminal, non-reducing beta-D-glucosyl residues with release of beta-D-glucose.. Its activity is regulated as follows. Activated by tissue damage and upon binding to PBP1 or PBP2. Beta-D-glucosidase active on scopolin &gt; esculin &gt;&gt; 4-MU-glucoside &gt;&gt; DIMBOA-glucoside. No activity with pNP-glucoside, oNP-glucoside and sinigrin as substrates. May possess beta-D-fucosidase activity. Required for the beneficial interaction with the endophytic fungus P.indica. May participate in the control of root colonization by P.indica by repressing defense responses and modulating other responses required for a mutualistic interaction. The polypeptide is Beta-glucosidase 23 (Arabidopsis thaliana (Mouse-ear cress)).